We begin with the raw amino-acid sequence, 413 residues long: Putative competence-damage inducible protein (413 aa).

It belongs to the CinA family.

The chain is Putative competence-damage inducible protein from Pediococcus pentosaceus (strain ATCC 25745 / CCUG 21536 / LMG 10740 / 183-1w).